Here is a 105-residue protein sequence, read N- to C-terminus: Pyrimidine/purine nucleoside phosphorylase (105 aa).

Belongs to the nucleoside phosphorylase PpnP family.

It carries out the reaction a purine D-ribonucleoside + phosphate = a purine nucleobase + alpha-D-ribose 1-phosphate. The enzyme catalyses adenosine + phosphate = alpha-D-ribose 1-phosphate + adenine. It catalyses the reaction cytidine + phosphate = cytosine + alpha-D-ribose 1-phosphate. The catalysed reaction is guanosine + phosphate = alpha-D-ribose 1-phosphate + guanine. It carries out the reaction inosine + phosphate = alpha-D-ribose 1-phosphate + hypoxanthine. The enzyme catalyses thymidine + phosphate = 2-deoxy-alpha-D-ribose 1-phosphate + thymine. It catalyses the reaction uridine + phosphate = alpha-D-ribose 1-phosphate + uracil. The catalysed reaction is xanthosine + phosphate = alpha-D-ribose 1-phosphate + xanthine. Its function is as follows. Catalyzes the phosphorolysis of diverse nucleosides, yielding D-ribose 1-phosphate and the respective free bases. Can use uridine, adenosine, guanosine, cytidine, thymidine, inosine and xanthosine as substrates. Also catalyzes the reverse reactions. The protein is Pyrimidine/purine nucleoside phosphorylase of Clostridioides difficile (strain 630) (Peptoclostridium difficile).